The sequence spans 255 residues: Thiazole synthase (255 aa).

The active-site Schiff-base intermediate with DXP is lysine 97. 1-deoxy-D-xylulose 5-phosphate contacts are provided by residues glycine 158, 184 to 185, and 206 to 207; these read AG and NT.

It belongs to the ThiG family. As to quaternary structure, homotetramer. Forms heterodimers with either ThiH or ThiS.

It is found in the cytoplasm. It catalyses the reaction [ThiS sulfur-carrier protein]-C-terminal-Gly-aminoethanethioate + 2-iminoacetate + 1-deoxy-D-xylulose 5-phosphate = [ThiS sulfur-carrier protein]-C-terminal Gly-Gly + 2-[(2R,5Z)-2-carboxy-4-methylthiazol-5(2H)-ylidene]ethyl phosphate + 2 H2O + H(+). Its pathway is cofactor biosynthesis; thiamine diphosphate biosynthesis. Its function is as follows. Catalyzes the rearrangement of 1-deoxy-D-xylulose 5-phosphate (DXP) to produce the thiazole phosphate moiety of thiamine. Sulfur is provided by the thiocarboxylate moiety of the carrier protein ThiS. In vitro, sulfur can be provided by H(2)S. In Acetivibrio thermocellus (strain ATCC 27405 / DSM 1237 / JCM 9322 / NBRC 103400 / NCIMB 10682 / NRRL B-4536 / VPI 7372) (Clostridium thermocellum), this protein is Thiazole synthase.